The primary structure comprises 495 residues: Heat stress transcription factor A-1a (495 aa).

A DNA-binding region spans residues 50–144; the sequence is PPPFLSKTYD…LLKKISRRKS (95 aa). The tract at residues 140-164 is disordered; sequence SRRKSVQGHGSSSSNPQSQQLSQGQ. A compositionally biased stretch (low complexity) spans 146–164; that stretch reads QGHGSSSSNPQSQQLSQGQ. The hydrophobic repeat HR-A/B stretch occupies residues 172 to 238; sequence SCVEVGKFGL…QIMSFLAKAV (67 aa). The segment at 255–288 is disordered; sequence NMHVTEANKKRRLREDSTAATESNSHSHSLEASD. Positions 262-268 match the Nuclear localization signal motif; the sequence is NKKRRLR. Positions 272-281 are enriched in polar residues; sequence TAATESNSHS. The AHA motif lies at 433–442; that stretch reads FEFLEEYMPE. The disordered stretch occupies residues 445 to 477; it reads VFGDATTLENNNNNNNNNNNNNNNNNNNNTNGR. Residues 454–473 are compositionally biased toward low complexity; sequence NNNNNNNNNNNNNNNNNNNN. Residues 482–489 carry the Nuclear export signal motif; the sequence is LIEELGLL.

The protein belongs to the HSF family. Class A subfamily. As to quaternary structure, homotrimer. Interacts with HSP70-1 and HSP70-4. Binds to CRK1. Binds to HSBP. Post-translationally, exhibits temperature-dependent phosphorylation. Phosphorylated by CRK1. Constitutively expressed.

It is found in the cytoplasm. Its subcellular location is the nucleus. In terms of biological role, transcriptional activator that specifically binds DNA sequence 5'-AGAAnnTTCT-3' known as heat shock promoter elements (HSE). This chain is Heat stress transcription factor A-1a (HSFA1A), found in Arabidopsis thaliana (Mouse-ear cress).